The following is a 447-amino-acid chain: Probable glycine dehydrogenase (decarboxylating) subunit 1 (447 aa).

It belongs to the GcvP family. N-terminal subunit subfamily. In terms of assembly, the glycine cleavage system is composed of four proteins: P, T, L and H. In this organism, the P 'protein' is a heterodimer of two subunits.

The enzyme catalyses N(6)-[(R)-lipoyl]-L-lysyl-[glycine-cleavage complex H protein] + glycine + H(+) = N(6)-[(R)-S(8)-aminomethyldihydrolipoyl]-L-lysyl-[glycine-cleavage complex H protein] + CO2. Functionally, the glycine cleavage system catalyzes the degradation of glycine. The P protein binds the alpha-amino group of glycine through its pyridoxal phosphate cofactor; CO(2) is released and the remaining methylamine moiety is then transferred to the lipoamide cofactor of the H protein. This Macrococcus caseolyticus (strain JCSC5402) (Macrococcoides caseolyticum) protein is Probable glycine dehydrogenase (decarboxylating) subunit 1.